The chain runs to 48 residues: Fimbrial assembly protein, serogroup E2 (48 aa).

The protein is Fimbrial assembly protein, serogroup E2 (fimB) of Dichelobacter nodosus (Bacteroides nodosus).